We begin with the raw amino-acid sequence, 83 residues long: Protein midgut expression 1 (83 aa).

Endoderm-specific pattern of expression during embryogenesis; anterior and posterior midgut primordia.

Its function is as follows. Involved in morphogenesis and development. In Drosophila melanogaster (Fruit fly), this protein is Protein midgut expression 1 (mex1).